A 362-amino-acid polypeptide reads, in one-letter code: Protein OCA4 (362 aa).

In terms of biological role, required for replication of Brome mosaic virus (BMV). This Saccharomyces cerevisiae (strain ATCC 204508 / S288c) (Baker's yeast) protein is Protein OCA4 (OCA4).